The chain runs to 248 residues: ATP synthase subunit a, chloroplastic (248 aa).

The next 5 helical transmembrane spans lie at Gly37–Gly57, Val96–Val116, Ile135–His155, Leu200–Leu220, and Gly221–Gly241.

This sequence belongs to the ATPase A chain family. In terms of assembly, F-type ATPases have 2 components, CF(1) - the catalytic core - and CF(0) - the membrane proton channel. CF(1) has five subunits: alpha(3), beta(3), gamma(1), delta(1), epsilon(1). CF(0) has four main subunits: a, b, b' and c.

The protein localises to the plastid. It is found in the chloroplast thylakoid membrane. Functionally, key component of the proton channel; it plays a direct role in the translocation of protons across the membrane. This Staurastrum punctulatum (Green alga) protein is ATP synthase subunit a, chloroplastic.